Here is a 272-residue protein sequence, read N- to C-terminus: MDLYAVWGNPIAQSKSPLIQNKLAAQTHQTMEYIAKLGDLDAFEQQLLAFFEEGAKGCNITSPFKERAYQLADEYSQRAKLAEACNTLKKLDDGKLYADNTDGIGLVTDLQRLNWLRPNQHVLILGAGGATKGVLLPLLQAQQNIVLANRTFSKTKELAERFQPYGNIQAVSMDSIPLQTYDLVINATSAGLSGGTASVDAEILKLGSAFYDMQYAKGTDTPFIALCKSLGLTNVSDGFGMLVAQAAHSFHLWRGVMPDFVSVYEQLKKAML.

Residues 14–16 (SKS) and T61 each bind shikimate. Catalysis depends on K65, which acts as the Proton acceptor. Shikimate contacts are provided by N86 and D102. NADP(+) is bound by residues 126-130 (GAGGA), 149-154 (NRTFSK), S189, and M213. Y215 is a binding site for shikimate. G238 lines the NADP(+) pocket.

The protein belongs to the shikimate dehydrogenase family. Homodimer.

The catalysed reaction is shikimate + NADP(+) = 3-dehydroshikimate + NADPH + H(+). It functions in the pathway metabolic intermediate biosynthesis; chorismate biosynthesis; chorismate from D-erythrose 4-phosphate and phosphoenolpyruvate: step 4/7. Functionally, involved in the biosynthesis of the chorismate, which leads to the biosynthesis of aromatic amino acids. Catalyzes the reversible NADPH linked reduction of 3-dehydroshikimate (DHSA) to yield shikimate (SA). The protein is Shikimate dehydrogenase (NADP(+)) of Haemophilus influenzae (strain ATCC 51907 / DSM 11121 / KW20 / Rd).